A 233-amino-acid chain; its full sequence is 3-dehydroquinate dehydratase (233 aa).

3-dehydroquinate contacts are provided by residues 34-36 (ELR) and arginine 64. The active-site Proton donor/acceptor is the histidine 118. Catalysis depends on lysine 145, which acts as the Schiff-base intermediate with substrate. 3-dehydroquinate is bound by residues arginine 185, serine 205, and glutamine 209.

The protein belongs to the type-I 3-dehydroquinase family. As to quaternary structure, homodimer.

It catalyses the reaction 3-dehydroquinate = 3-dehydroshikimate + H2O. It functions in the pathway metabolic intermediate biosynthesis; chorismate biosynthesis; chorismate from D-erythrose 4-phosphate and phosphoenolpyruvate: step 3/7. Functionally, involved in the third step of the chorismate pathway, which leads to the biosynthesis of aromatic amino acids. Catalyzes the cis-dehydration of 3-dehydroquinate (DHQ) and introduces the first double bond of the aromatic ring to yield 3-dehydroshikimate. In Coxiella burnetii (strain CbuG_Q212) (Coxiella burnetii (strain Q212)), this protein is 3-dehydroquinate dehydratase.